The chain runs to 333 residues: L-lactate dehydrogenase A chain (333 aa).

A2 carries the post-translational modification N-acetylalanine. Residues 30-58 (GAVGMACAISILMKDLADEVALVDVMEDK) and R100 each bind NAD(+). The substrate site is built by R107, N139, and R170. N139 contributes to the NAD(+) binding site. The active-site Proton acceptor is H194. T249 serves as a coordination point for substrate.

It belongs to the LDH/MDH superfamily. LDH family. Homotetramer.

It localises to the cytoplasm. The catalysed reaction is (S)-lactate + NAD(+) = pyruvate + NADH + H(+). It participates in fermentation; pyruvate fermentation to lactate; (S)-lactate from pyruvate: step 1/1. Interconverts simultaneously and stereospecifically pyruvate and lactate with concomitant interconversion of NADH and NAD(+). The sequence is that of L-lactate dehydrogenase A chain (ldha) from Squalus acanthias (Spiny dogfish).